Reading from the N-terminus, the 574-residue chain is Pre-mRNA-processing protein 45 (574 aa).

5 disordered regions span residues 1-46, 203-234, 350-406, 478-503, and 549-574; these read MAAL…WKPK, PPRF…TAQD, ETGI…SEMR, AGSS…SKDR, and MDAA…ARDE. Composition is skewed to pro residues over residues 24–33 and 215–224; these read APLPTTPGPQ and PAEPPPPVLQ. Positions 363–377 are enriched in acidic residues; it reads GSEEESDEEEEDEEA. Composition is skewed to basic and acidic residues over residues 378 to 397, 493 to 503, and 558 to 574; these read IRER…KEMR, EGIKEEMSKDR, and RTAE…ARDE.

Belongs to the SNW family. Associated with the spliceosome.

It is found in the nucleus. Functionally, involved in pre-mRNA splicing. The chain is Pre-mRNA-processing protein 45 (PRP45) from Cryptococcus neoformans var. neoformans serotype D (strain JEC21 / ATCC MYA-565) (Filobasidiella neoformans).